A 312-amino-acid polypeptide reads, in one-letter code: 1-(5-phosphoribosyl)-5-[(5-phosphoribosylamino)methylideneamino] imidazole-4-carboxamide isomerase HISN3, chloroplastic (312 aa).

A chloroplast-targeting transit peptide spans 1 to 67; sequence MRSPASTPSI…IHKGKVKQIV (67 aa). D57 lines the 1-(5-phospho-beta-D-ribosyl)-5-[(5-phospho-beta-D-ribosylamino)methylideneamino]imidazole-4-carboxamide pocket. Q65 lines the 5-[(5-phospho-1-deoxy-D-ribulos-1-ylimino)methylamino]-1-(5-phospho-beta-D-ribosyl)imidazole-4-carboxamide pocket. Na(+) contacts are provided by Q65 and I66. G68 serves as a coordination point for 1-(5-phospho-beta-D-ribosyl)-5-[(5-phospho-beta-D-ribosylamino)methylideneamino]imidazole-4-carboxamide. 5-[(5-phospho-1-deoxy-D-ribulos-1-ylimino)methylamino]-1-(5-phospho-beta-D-ribosyl)imidazole-4-carboxamide-binding residues include H108, G138, T158, and S159. Positions 138, 158, and 159 each coordinate 1-(5-phospho-beta-D-ribosyl)-5-[(5-phospho-beta-D-ribosylamino)methylideneamino]imidazole-4-carboxamide. Na(+) is bound by residues S159 and F162. 4 residues coordinate 1-(5-phospho-beta-D-ribosyl)-5-[(5-phospho-beta-D-ribosylamino)methylideneamino]imidazole-4-carboxamide: D187, R203, W204, and H230. D187 lines the 5-[(5-phospho-1-deoxy-D-ribulos-1-ylimino)methylamino]-1-(5-phospho-beta-D-ribosyl)imidazole-4-carboxamide pocket. W204 contributes to the 5-[(5-phospho-1-deoxy-D-ribulos-1-ylimino)methylamino]-1-(5-phospho-beta-D-ribosyl)imidazole-4-carboxamide binding site. E235 contacts Na(+). 1-(5-phospho-beta-D-ribosyl)-5-[(5-phospho-beta-D-ribosylamino)methylideneamino]imidazole-4-carboxamide is bound by residues G236, G262, G285, and S286. G236, G262, G285, and S286 together coordinate 5-[(5-phospho-1-deoxy-D-ribulos-1-ylimino)methylamino]-1-(5-phospho-beta-D-ribosyl)imidazole-4-carboxamide.

It belongs to the HisA/HisF family. Requires Na(+) as cofactor.

The protein resides in the plastid. It localises to the chloroplast. The enzyme catalyses 1-(5-phospho-beta-D-ribosyl)-5-[(5-phospho-beta-D-ribosylamino)methylideneamino]imidazole-4-carboxamide = 5-[(5-phospho-1-deoxy-D-ribulos-1-ylimino)methylamino]-1-(5-phospho-beta-D-ribosyl)imidazole-4-carboxamide. It functions in the pathway amino-acid biosynthesis; L-histidine biosynthesis; L-histidine from 5-phospho-alpha-D-ribose 1-diphosphate: step 4/9. In terms of biological role, component of the histidine biosynthesis pathway that catalyzes the isomerization of 5'-ProFAR (pro-phosphoribosyl formimino-5-aminoimidazole-4-carboxamide ribonucleotide, referred as 1-(5-phospho-beta-D-ribosyl)-5-[(5-phospho-beta-D-ribosylamino)methylideneamino]imidazole-4-carboxamide) to PrFAR (phosphoribulosyl formimino-5-aminoimidazole-4-carboxamide ribonucleotide, referred as 5-[(5-phospho-1-deoxy-D-ribulos-1-ylimino)methylamino]-1-(5-phospho-beta-D-ribosyl)imidazole-4-carboxamide). The polypeptide is 1-(5-phosphoribosyl)-5-[(5-phosphoribosylamino)methylideneamino] imidazole-4-carboxamide isomerase HISN3, chloroplastic (Medicago truncatula (Barrel medic)).